Reading from the N-terminus, the 400-residue chain is Probable tRNA sulfurtransferase (400 aa).

Residues 60–164 enclose the THUMP domain; that stretch reads EPIIEKLKNV…KEATYITSGT (105 aa). ATP-binding positions include 182–183, 207–208, Arg-264, Gly-286, and Gln-295; these read LL and HF.

This sequence belongs to the ThiI family.

The protein resides in the cytoplasm. It carries out the reaction [ThiI sulfur-carrier protein]-S-sulfanyl-L-cysteine + a uridine in tRNA + 2 reduced [2Fe-2S]-[ferredoxin] + ATP + H(+) = [ThiI sulfur-carrier protein]-L-cysteine + a 4-thiouridine in tRNA + 2 oxidized [2Fe-2S]-[ferredoxin] + AMP + diphosphate. The enzyme catalyses [ThiS sulfur-carrier protein]-C-terminal Gly-Gly-AMP + S-sulfanyl-L-cysteinyl-[cysteine desulfurase] + AH2 = [ThiS sulfur-carrier protein]-C-terminal-Gly-aminoethanethioate + L-cysteinyl-[cysteine desulfurase] + A + AMP + 2 H(+). It participates in cofactor biosynthesis; thiamine diphosphate biosynthesis. Its function is as follows. Catalyzes the ATP-dependent transfer of a sulfur to tRNA to produce 4-thiouridine in position 8 of tRNAs, which functions as a near-UV photosensor. Also catalyzes the transfer of sulfur to the sulfur carrier protein ThiS, forming ThiS-thiocarboxylate. This is a step in the synthesis of thiazole, in the thiamine biosynthesis pathway. The sulfur is donated as persulfide by IscS. The protein is Probable tRNA sulfurtransferase of Oceanobacillus iheyensis (strain DSM 14371 / CIP 107618 / JCM 11309 / KCTC 3954 / HTE831).